The chain runs to 321 residues: tRNA(Ile)-lysidine synthase (321 aa).

Residue 30-35 (SGGSDS) participates in ATP binding.

This sequence belongs to the tRNA(Ile)-lysidine synthase family.

Its subcellular location is the cytoplasm. It carries out the reaction cytidine(34) in tRNA(Ile2) + L-lysine + ATP = lysidine(34) in tRNA(Ile2) + AMP + diphosphate + H(+). Functionally, ligates lysine onto the cytidine present at position 34 of the AUA codon-specific tRNA(Ile) that contains the anticodon CAU, in an ATP-dependent manner. Cytidine is converted to lysidine, thus changing the amino acid specificity of the tRNA from methionine to isoleucine. The chain is tRNA(Ile)-lysidine synthase from Chlamydia trachomatis serovar L2 (strain ATCC VR-902B / DSM 19102 / 434/Bu).